A 178-amino-acid polypeptide reads, in one-letter code: ATP synthase subunit delta (178 aa).

The protein belongs to the ATPase delta chain family. As to quaternary structure, F-type ATPases have 2 components, F(1) - the catalytic core - and F(0) - the membrane proton channel. F(1) has five subunits: alpha(3), beta(3), gamma(1), delta(1), epsilon(1). F(0) has three main subunits: a(1), b(2) and c(10-14). The alpha and beta chains form an alternating ring which encloses part of the gamma chain. F(1) is attached to F(0) by a central stalk formed by the gamma and epsilon chains, while a peripheral stalk is formed by the delta and b chains.

The protein resides in the cell membrane. Functionally, f(1)F(0) ATP synthase produces ATP from ADP in the presence of a proton or sodium gradient. F-type ATPases consist of two structural domains, F(1) containing the extramembraneous catalytic core and F(0) containing the membrane proton channel, linked together by a central stalk and a peripheral stalk. During catalysis, ATP synthesis in the catalytic domain of F(1) is coupled via a rotary mechanism of the central stalk subunits to proton translocation. Its function is as follows. This protein is part of the stalk that links CF(0) to CF(1). It either transmits conformational changes from CF(0) to CF(1) or is implicated in proton conduction. The polypeptide is ATP synthase subunit delta (Streptococcus pyogenes serotype M1).